The chain runs to 127 residues: Mitochondrial pyruvate carrier 2 (127 aa).

The Mitochondrial matrix portion of the chain corresponds to 2–40; the sequence is SAAGARGLRATYHRLLDKVELMLPEKLRPLYNHPAGPRT. The chain crosses the membrane as a helical span at residues 41–61; it reads VFFWAPIMKRGLVCAGLADMA. Residues 62–72 lie on the Mitochondrial intermembrane side of the membrane; sequence RPAEKLSTAQS. The helical transmembrane segment at 73–90 threads the bilayer; it reads AVLMATGFIWSRYSLVII. Topologically, residues 91–95 are mitochondrial matrix; sequence PKNWS. The helical transmembrane segment at 96-115 threads the bilayer; sequence LFAVNFFVGAAGASQLFRIW. Residues 116-127 lie on the Mitochondrial intermembrane side of the membrane; sequence RYNQELKAKAHK.

This sequence belongs to the mitochondrial pyruvate carrier (MPC) (TC 2.A.105) family. As to quaternary structure, homodimer. Homooligomer. Forms heterodimers with MPC1 and MPC1L. The heterodimer is the more stable and dominant form.

Its subcellular location is the mitochondrion inner membrane. It carries out the reaction pyruvate(out) + H(+)(out) = pyruvate(in) + H(+)(in). Functionally, mediates the uptake of pyruvate into mitochondria. This Pongo abelii (Sumatran orangutan) protein is Mitochondrial pyruvate carrier 2 (MPC2).